A 361-amino-acid polypeptide reads, in one-letter code: Septin-2 (361 aa).

Tyrosine 17 bears the Phosphotyrosine mark. The region spanning 34–306 is the Septin-type G domain; the sequence is KGFEFTLMVV…ENFRSERLKR (273 aa). The tract at residues 44 to 51 is G1 motif; sequence GESGLGKS. GTP is bound by residues 44-51, threonine 78, glycine 104, and 183-191; these read GESGLGKS and KADTLTLKE. Residues 101–104 are G3 motif; the sequence is DTPG. Positions 182–185 are G4 motif; that stretch reads AKAD. Lysine 190 bears the N6-acetyllysine mark. Tyrosine 211 carries the phosphotyrosine modification. At serine 218 the chain carries Phosphoserine. Residues glycine 241 and arginine 256 each contribute to the GTP site. The tract at residues 260 to 270 is important for dimerization; the sequence is WGVVEVENPEH.

Belongs to the TRAFAC class TrmE-Era-EngA-EngB-Septin-like GTPase superfamily. Septin GTPase family. In terms of assembly, septins polymerize into heterooligomeric protein complexes that form filaments, and associate with cellular membranes, actin filaments and microtubules. GTPase activity is required for filament formation. Filaments are assembled from asymmetrical heterotrimers, composed of SEPTIN2, SEPTIN6 and SEPTIN7 that associate head-to-head to form a hexameric unit. Interaction between SEPTIN2 and SEPTIN7 seems indirect. Interacts with SEPTIN5. Interaction with SEPTIN4 not detected. Interacts with SEPTIN9. Component of a septin core octameric complex consisting of SEPTIN12, SEPTIN7, SEPTIN6 and SEPTIN2 or SEPTIN4 in the order 12-7-6-2-2-6-7-12 or 12-7-6-4-4-6-7-12 and located in the sperm annulus. Interacts with MAP4. Interacts with DZIP1L.

It is found in the cytoplasm. It localises to the cytoskeleton. The protein localises to the spindle. The protein resides in the chromosome. Its subcellular location is the centromere. It is found in the kinetochore. It localises to the cleavage furrow. The protein localises to the midbody. The protein resides in the cell cortex. Its subcellular location is the cell projection. It is found in the cilium membrane. It localises to the cilium. The protein localises to the flagellum. Functionally, filament-forming cytoskeletal GTPase. Forms a filamentous structure with SEPTIN12, SEPTIN6, SEPTIN2 and probably SEPTIN4 at the sperm annulus which is required for the structural integrity and motility of the sperm tail during postmeiotic differentiation. Required for normal organization of the actin cytoskeleton. Plays a role in the biogenesis of polarized columnar-shaped epithelium by maintaining polyglutamylated microtubules, thus facilitating efficient vesicle transport, and by impeding MAP4 binding to tubulin. Required for the progression through mitosis. Forms a scaffold at the midplane of the mitotic splindle required to maintain CENPE localization at kinetochores and consequently chromosome congression. During anaphase, may be required for chromosome segregation and spindle elongation. Plays a role in ciliogenesis and collective cell movements. In cilia, required for the integrity of the diffusion barrier at the base of the primary cilium that prevents diffusion of transmembrane proteins between the cilia and plasma membranes: probably acts by regulating the assembly of the tectonic-like complex (also named B9 complex) by localizing TMEM231 protein. The sequence is that of Septin-2 from Bos taurus (Bovine).